We begin with the raw amino-acid sequence, 926 residues long: OTU domain-containing protein 7A (926 aa).

The tract at residues P75–R99 is disordered. The span at R82 to R99 shows a compositional bias: basic and acidic residues. S119 bears the Phosphoserine mark. A TRAF-binding region spans residues E168–W410. The tract at residues A183–T449 is catalytic. The region spanning L199 to M374 is the OTU domain. D207 is a catalytic residue. The active-site Nucleophile is the C210. The Proton acceptor role is filled by H367. Disordered stretches follow at residues P452–A514, G537–K613, and E668–R768. The span at V481–K491 shows a compositional bias: low complexity. Positions N492–A510 are enriched in basic and acidic residues. The Nuclear localization signal signature appears at K494–R509. 3 stretches are compositionally biased toward low complexity: residues G576–T592, A677–A691, and P729–T742. At R880 the chain carries Omega-N-methylarginine. The A20-type zinc-finger motif lies at G884–R919. Residues C890, C895, C907, and C910 each contribute to the Zn(2+) site.

It belongs to the peptidase C64 family.

It is found in the cytoplasm. Its subcellular location is the nucleus. The enzyme catalyses Thiol-dependent hydrolysis of ester, thioester, amide, peptide and isopeptide bonds formed by the C-terminal Gly of ubiquitin (a 76-residue protein attached to proteins as an intracellular targeting signal).. Functionally, deubiquitinase, which cleaves 'Lys-11'-linked polyubiquitin chains. Might be required for PA28-20S proteasome assembly. The sequence is that of OTU domain-containing protein 7A (OTUD7A) from Homo sapiens (Human).